We begin with the raw amino-acid sequence, 738 residues long: Exocyst complex component 3 (738 aa).

Residues 28–91 (LEKVEQYRHR…DEVERLLRGV (64 aa)) adopt a coiled-coil conformation.

Belongs to the SEC6 family. In terms of assembly, the exocyst complex is composed of Sec3/Exoc1, Sec5/Exoc2, Sec6/Exoc3, Sec8/Exoc4, Sec10/Exoc5, Sec15/Exoc6, Exo70/Exoc7 and Exo84/Exoc8.

In terms of biological role, component of the exocyst complex involved in the docking of exocytic vesicles with fusion sites on the plasma membrane. The sequence is that of Exocyst complex component 3 from Drosophila melanogaster (Fruit fly).